Here is a 636-residue protein sequence, read N- to C-terminus: Beta-galactosidase-1-like protein 2 (636 aa).

Positions 1–32 (MTTWSLRRRPARTLGLLLLVVLGFLVLRRLDW) are cleaved as a signal peptide. Glutamate 201 acts as the Proton donor in catalysis. Glutamate 277 (nucleophile) is an active-site residue.

It belongs to the glycosyl hydrolase 35 family.

It is found in the secreted. The polypeptide is Beta-galactosidase-1-like protein 2 (GLB1L2) (Homo sapiens (Human)).